Reading from the N-terminus, the 492-residue chain is GTPase Obg (492 aa).

In terms of domain architecture, Obg spans 2–159; sequence PRFVDRVVIH…RELTLELKTV (158 aa). Residues 160–340 enclose the OBG-type G domain; it reads ADVGLIGFPS…LIFGLWQMIS (181 aa). Residues 166–173, 191–195, 212–215, 292–295, and 321–323 each bind GTP; these read GFPSAGKS, FTTLV, DVPG, NKID, and STV. 2 residues coordinate Mg(2+): S173 and T193. The OCT domain occupies 358–438; that stretch reads PVPVDDSGFR…IGDMTFDWEP (81 aa). The disordered stretch occupies residues 449 to 492; it reads SGRGTDARLERTERVGAAERKAARRQRRTGDDAERGTTERGENT. Basic and acidic residues-rich tracts occupy residues 453–469 and 476–492; these read TDAR…AERK and RTGD…GENT.

It belongs to the TRAFAC class OBG-HflX-like GTPase superfamily. OBG GTPase family. In terms of assembly, monomer. It depends on Mg(2+) as a cofactor.

It localises to the cytoplasm. Functionally, an essential GTPase which binds GTP, GDP and possibly (p)ppGpp with moderate affinity, with high nucleotide exchange rates and a fairly low GTP hydrolysis rate. Plays a role in control of the cell cycle, stress response, ribosome biogenesis and in those bacteria that undergo differentiation, in morphogenesis control. In Mycobacterium avium (strain 104), this protein is GTPase Obg.